A 148-amino-acid polypeptide reads, in one-letter code: Arginine repressor (148 aa).

It belongs to the ArgR family.

Its subcellular location is the cytoplasm. It functions in the pathway amino-acid biosynthesis; L-arginine biosynthesis [regulation]. Functionally, regulates arginine biosynthesis genes. In Chloroherpeton thalassium (strain ATCC 35110 / GB-78), this protein is Arginine repressor.